Consider the following 272-residue polypeptide: Ribosomal RNA small subunit methyltransferase A (272 aa).

The S-adenosyl-L-methionine site is built by histidine 11, leucine 13, glycine 38, glutamate 59, aspartate 84, and asparagine 109.

Belongs to the class I-like SAM-binding methyltransferase superfamily. rRNA adenine N(6)-methyltransferase family. RsmA subfamily.

The protein localises to the cytoplasm. The catalysed reaction is adenosine(1518)/adenosine(1519) in 16S rRNA + 4 S-adenosyl-L-methionine = N(6)-dimethyladenosine(1518)/N(6)-dimethyladenosine(1519) in 16S rRNA + 4 S-adenosyl-L-homocysteine + 4 H(+). In terms of biological role, specifically dimethylates two adjacent adenosines (A1518 and A1519) in the loop of a conserved hairpin near the 3'-end of 16S rRNA in the 30S particle. May play a critical role in biogenesis of 30S subunits. The chain is Ribosomal RNA small subunit methyltransferase A from Rippkaea orientalis (strain PCC 8801 / RF-1) (Cyanothece sp. (strain PCC 8801)).